Here is a 364-residue protein sequence, read N- to C-terminus: Paraneoplastic antigen Ma2 homolog (364 aa).

A2 bears the N-acetylalanine mark. The span at 335–353 (EEEEASFENESIEEPEEGD) shows a compositional bias: acidic residues. Positions 335–364 (EEEEASFENESIEEPEEGDGYGGWNHEGDD) are disordered. Residues 354 to 364 (GYGGWNHEGDD) show a composition bias toward gly residues.

Belongs to the PNMA family.

Its subcellular location is the nucleus. It localises to the nucleolus. The chain is Paraneoplastic antigen Ma2 homolog (PNMA2) from Macaca fascicularis (Crab-eating macaque).